The sequence spans 75 residues: Cytochrome c oxidase subunit 6C (75 aa).

Residues 1 to 13 lie on the Mitochondrial matrix side of the membrane; sequence MAPEVLPKPQMRG. The helical transmembrane segment at 14–54 threads the bilayer; sequence LLAKRLRFHMVTAFVLSLGVAALYKFRVADKRKKAYADFYR. The Mitochondrial intermembrane portion of the chain corresponds to 55 to 75; the sequence is NYDAMKDFEEMRKAGIFQSVK.

Belongs to the cytochrome c oxidase subunit 6c family. Component of the cytochrome c oxidase (complex IV, CIV), a multisubunit enzyme composed of 14 subunits. The complex is composed of a catalytic core of 3 subunits MT-CO1, MT-CO2 and MT-CO3, encoded in the mitochondrial DNA, and 11 supernumerary subunits COX4I, COX5A, COX5B, COX6A, COX6B, COX6C, COX7A, COX7B, COX7C, COX8 and NDUFA4, which are encoded in the nuclear genome. The complex exists as a monomer or a dimer and forms supercomplexes (SCs) in the inner mitochondrial membrane with NADH-ubiquinone oxidoreductase (complex I, CI) and ubiquinol-cytochrome c oxidoreductase (cytochrome b-c1 complex, complex III, CIII), resulting in different assemblies (supercomplex SCI(1)III(2)IV(1) and megacomplex MCI(2)III(2)IV(2)).

It is found in the mitochondrion inner membrane. It functions in the pathway energy metabolism; oxidative phosphorylation. Functionally, component of the cytochrome c oxidase, the last enzyme in the mitochondrial electron transport chain which drives oxidative phosphorylation. The respiratory chain contains 3 multisubunit complexes succinate dehydrogenase (complex II, CII), ubiquinol-cytochrome c oxidoreductase (cytochrome b-c1 complex, complex III, CIII) and cytochrome c oxidase (complex IV, CIV), that cooperate to transfer electrons derived from NADH and succinate to molecular oxygen, creating an electrochemical gradient over the inner membrane that drives transmembrane transport and the ATP synthase. Cytochrome c oxidase is the component of the respiratory chain that catalyzes the reduction of oxygen to water. Electrons originating from reduced cytochrome c in the intermembrane space (IMS) are transferred via the dinuclear copper A center (CU(A)) of subunit 2 and heme A of subunit 1 to the active site in subunit 1, a binuclear center (BNC) formed by heme A3 and copper B (CU(B)). The BNC reduces molecular oxygen to 2 water molecules using 4 electrons from cytochrome c in the IMS and 4 protons from the mitochondrial matrix. The polypeptide is Cytochrome c oxidase subunit 6C (COX6C) (Trachypithecus cristatus (Silvered leaf-monkey)).